The primary structure comprises 437 residues: F-box only protein 9 (437 aa).

The disordered stretch occupies residues 1–29 (MAEAEEDCHSEAVREGDDDDENESPAETD). Over residues 16 to 26 (GDDDDENESPA) the composition is skewed to acidic residues. The TPR repeat unit spans residues 84-117 (ARELFLKAVEEEQNGALYEAIKFYRRAMQLVPDI). Serine 126 bears the Phosphoserine mark. Positions 175 to 226 (QTHISALPMEVLMYVFRWVVSSDLDLRSLEQLSQVCRGFYICARDPEIWRLA) constitute an F-box domain.

Part of the SCF (SKP1-CUL1-F-box) E3 ubiquitin-protein ligase complex SCF(FBXO9) composed of CUL1, SKP1, RBX1 and FBXO9. Interacts with TTI1 and TELO2; when TTI1 and TELO2 are phosphorylated by CK2.

It is found in the cytoplasm. It participates in protein modification; protein ubiquitination. Substrate recognition component of a SCF (SKP1-CUL1-F-box protein) E3 ubiquitin-protein ligase complex which mediates the ubiquitination and subsequent proteasomal degradation of target proteins and plays a role in several biological processes such as cell cycle, cell proliferation, or maintenance of chromosome stability. Ubiquitinates mTORC1-bound TTI1 and TELO2 when they are phosphorylated by CK2 following growth factor deprivation, leading to their degradation. In contrast, does not mediate ubiquitination of TTI1 and TELO2 when they are part of the mTORC2 complex. As a consequence, mTORC1 is inactivated to restrain cell growth and protein translation, while mTORC2 is the activated due to the relief of feedback inhibition by mTORC1. Plays a role in maintaining epithelial cell survival by regulating the turn-over of chromatin modulator PRMT4 through ubiquitination and degradation by the proteasomal pathway. Also regulates PPARgamma stability by facilitating PPARgamma/PPARG ubiquitination and thereby plays a role in adipocyte differentiation. This is F-box only protein 9 (FBXO9) from Bos taurus (Bovine).